The following is a 281-amino-acid chain: Probable endonuclease 4 (281 aa).

9 residues coordinate Zn(2+): H69, H109, E145, D179, H182, H216, D229, H231, and E261.

The protein belongs to the AP endonuclease 2 family. Zn(2+) is required as a cofactor.

It catalyses the reaction Endonucleolytic cleavage to 5'-phosphooligonucleotide end-products.. Endonuclease IV plays a role in DNA repair. It cleaves phosphodiester bonds at apurinic or apyrimidinic (AP) sites, generating a 3'-hydroxyl group and a 5'-terminal sugar phosphate. In Nautilia profundicola (strain ATCC BAA-1463 / DSM 18972 / AmH), this protein is Probable endonuclease 4.